The following is a 424-amino-acid chain: Adenylosuccinate synthetase (424 aa).

GTP is bound by residues Gly-12–Lys-18 and Gly-40–Thr-42. Asp-13 acts as the Proton acceptor in catalysis. Mg(2+) is bound by residues Asp-13 and Gly-40. IMP is bound by residues Asp-13 to Lys-16, Asn-38 to His-41, Thr-130, Arg-144, Asn-220, Thr-235, and Arg-299. The Proton donor role is filled by His-41. Val-295 to Arg-301 is a binding site for substrate. GTP is bound by residues Arg-301, Lys-327–Asp-329, and Gly-412–Gly-414.

It belongs to the adenylosuccinate synthetase family. As to quaternary structure, homodimer. It depends on Mg(2+) as a cofactor.

Its subcellular location is the cytoplasm. It catalyses the reaction IMP + L-aspartate + GTP = N(6)-(1,2-dicarboxyethyl)-AMP + GDP + phosphate + 2 H(+). Its pathway is purine metabolism; AMP biosynthesis via de novo pathway; AMP from IMP: step 1/2. Its function is as follows. Plays an important role in the de novo pathway and in the salvage pathway of purine nucleotide biosynthesis. Catalyzes the first committed step in the biosynthesis of AMP from IMP. This Aspergillus niger (strain ATCC MYA-4892 / CBS 513.88 / FGSC A1513) protein is Adenylosuccinate synthetase.